A 136-amino-acid chain; its full sequence is MEPNNLKEELVSVFEKACSSHKERLDFICSVRESDTFSNVDVPLAPIKTIIEIAKNEENQTEILKLAIENIKTLSTVGSGQYIASHFSTHNEVAIIFCISYFLYHFNFLHDENKKQLLKRAFEAVAEKIADYLNEN.

This is an uncharacterized protein from Mycoplasma pneumoniae (strain ATCC 29342 / M129 / Subtype 1) (Mycoplasmoides pneumoniae).